Reading from the N-terminus, the 187-residue chain is Aminodeoxychorismate synthase component 2 (187 aa).

The region spanning 1–187 (MILLIDNYDS…HQLLANFLHR (187 aa)) is the Glutamine amidotransferase type-1 domain. Catalysis depends on residues Cys-79, His-168, and Glu-170.

Monomer. Heterodimer consisting of two non-identical subunits: a glutamine amidotransferase subunit (PabA) and a aminodeoxychorismate synthase subunit (PabB).

The catalysed reaction is chorismate + L-glutamine = 4-amino-4-deoxychorismate + L-glutamate. It participates in cofactor biosynthesis; tetrahydrofolate biosynthesis; 4-aminobenzoate from chorismate: step 1/2. Inhibited by 6-diazo-5-oxo-L-norleucine (DON). The inhibition is competitive with glutamine, but uncompetitive with chorismate. Its function is as follows. Part of a heterodimeric complex that catalyzes the two-step biosynthesis of 4-amino-4-deoxychorismate (ADC), a precursor of p-aminobenzoate (PABA) and tetrahydrofolate. In the first step, a glutamine amidotransferase (PabA) generates ammonia as a substrate that, along with chorismate, is used in the second step, catalyzed by aminodeoxychorismate synthase (PabB) to produce ADC. PabA converts glutamine into glutamate only in the presence of stoichiometric amounts of PabB. The protein is Aminodeoxychorismate synthase component 2 of Escherichia coli (strain K12).